Reading from the N-terminus, the 940-residue chain is Inter-alpha-trypsin inhibitor heavy chain H5 (940 aa).

The first 16 residues, 1 to 16, serve as a signal peptide directing secretion; the sequence is MLPLLGLCFALPLCAG. One can recognise a VIT domain in the interval 35–161; the sequence is IPRQVRLLQR…KAAFLLSYEE (127 aa). Asn-97 and Asn-127 each carry an N-linked (GlcNAc...) asparagine glycan. The interval 207-227 is disordered; that stretch reads NSRQRGSGRGPDDSGPPPSTV. Asn-231, Asn-421, Asn-508, Asn-694, Asn-778, and Asn-795 each carry an N-linked (GlcNAc...) asparagine glycan. The region spanning 295–478 is the VWFA domain; sequence NVVFVLDSSA…AQLIGFYDEI (184 aa).

It belongs to the ITIH family.

It is found in the secreted. May act as a tumor suppressor. This is Inter-alpha-trypsin inhibitor heavy chain H5 (ITIH5) from Bos taurus (Bovine).